A 677-amino-acid chain; its full sequence is UvrABC system protein B (677 aa).

The Helicase ATP-binding domain occupies Glu-24 to Arg-412. Gly-37 to Thr-44 serves as a coordination point for ATP. The Beta-hairpin signature appears at Tyr-90 to Ile-113. Residues Gln-429 to Arg-591 form the Helicase C-terminal domain. In terms of domain architecture, UVR spans Glu-635 to Leu-670.

The protein belongs to the UvrB family. In terms of assembly, forms a heterotetramer with UvrA during the search for lesions. Interacts with UvrC in an incision complex.

It is found in the cytoplasm. The UvrABC repair system catalyzes the recognition and processing of DNA lesions. A damage recognition complex composed of 2 UvrA and 2 UvrB subunits scans DNA for abnormalities. Upon binding of the UvrA(2)B(2) complex to a putative damaged site, the DNA wraps around one UvrB monomer. DNA wrap is dependent on ATP binding by UvrB and probably causes local melting of the DNA helix, facilitating insertion of UvrB beta-hairpin between the DNA strands. Then UvrB probes one DNA strand for the presence of a lesion. If a lesion is found the UvrA subunits dissociate and the UvrB-DNA preincision complex is formed. This complex is subsequently bound by UvrC and the second UvrB is released. If no lesion is found, the DNA wraps around the other UvrB subunit that will check the other stand for damage. The chain is UvrABC system protein B from Bacteroides fragilis (strain ATCC 25285 / DSM 2151 / CCUG 4856 / JCM 11019 / LMG 10263 / NCTC 9343 / Onslow / VPI 2553 / EN-2).